The primary structure comprises 1381 residues: Major capsid protein (1381 aa).

The protein belongs to the herpesviridae major capsid protein family. As to quaternary structure, homomultimer. Makes the hexons and eleven out of twelve pentons. Interacts with triplex proteins 1/TRX1 and 2/TRX2; adjacent capsomers are linked together in groups of three by triplexes, heterotrimeric complexes composed of one molecule of TRX1 and two molecules of TRX2. Interacts with scaffold protein; this interaction allows efficient MCP transport to the host nucleus. Interacts with capsid vertex component 2/CVC2. Interacts with the small capsomere-interacting protein/SCP.

The protein resides in the virion. Its subcellular location is the host nucleus. In terms of biological role, self-assembles to form an icosahedral capsid with a T=16 symmetry, about 200 nm in diameter, and consisting of 150 hexons and 12 pentons (total of 162 capsomers). Hexons form the edges and faces of the capsid and are each composed of six MCP molecules. In contrast, one penton is found at each of the 12 vertices. Eleven of the pentons are MCP pentamers, while the last vertex is occupied by the portal complex. The capsid is surrounded by a layer of proteinaceous material designated the tegument which, in turn, is enclosed in an envelope of host cell-derived lipids containing virus-encoded glycoproteins. This chain is Major capsid protein, found in Epstein-Barr virus (strain B95-8) (HHV-4).